Here is a 545-residue protein sequence, read N- to C-terminus: Probable acyl-activating enzyme 4 (545 aa).

This sequence belongs to the ATP-dependent AMP-binding enzyme family. Expressed in roots, leaves, stems, flowers and developing seeds.

Functionally, may act as an acid--thiol ligase that activates carboxylic acids by forming acyl-CoAs. In Arabidopsis thaliana (Mouse-ear cress), this protein is Probable acyl-activating enzyme 4 (AEE4).